Reading from the N-terminus, the 607-residue chain is MDIKNKNLTELNELCKQIRERILEVVSQNGGHLSSNMGAVELIVAMHYVFDPDSDPFIFDVSHQSYAHKLLTGRWDEFSSLRQLGGISGYTKPKESKFDYFVAGHSSTSISLAVGAAKAIKLKGENRIPVALIGDGAMSAGMAYEAMNELGERKYPCIIILNDNEMSISRPIGAISKYLSQMMAGEFYQKFKGRVNQLLSYIPDGAAYMAKRFEEGFRLITPGMLFEELGLEYIGPVNGHDLADLISAFKVAKSMKKPVIVHTQTIKGKGYEKAEGFDEHWHGVGPFDLQSGEPKKHAKRSATQIYSEALLNLAAKHKNVVGVTAAMPTGTGMDKLIEAFPERFWDVAIAEQHAVTSMAAMAKEGFKPYITIYSTFMQRAYDQVIHDLAIMNLSAVIAMDRAGIVGEDGETHEGCFDISFLNAIPNVSMCAPRDEQSFKDMIEYSYVHEGLLAIRYPRGSFILHEQFKDAPKISRGKSVLLRENKNAKTALIGYGNGVGRAYEVSIKLDFETDLIDLVFAKPLDKEFLINLAKKDKIWYIFSDSVKKGGIGDILSAFLQENKIYDVEINTFEYDDKFLPHGKTPDVEYFLGLDIDSLAKKILNDKKY.

Residues His63 and Gly104 to Ser106 contribute to the thiamine diphosphate site. Asp135 contributes to the Mg(2+) binding site. Thiamine diphosphate contacts are provided by residues Gly136 to Ala137, Asn164, Tyr271, and Glu351. Asn164 lines the Mg(2+) pocket.

This sequence belongs to the transketolase family. DXPS subfamily. Homodimer. It depends on Mg(2+) as a cofactor. Thiamine diphosphate is required as a cofactor.

The enzyme catalyses D-glyceraldehyde 3-phosphate + pyruvate + H(+) = 1-deoxy-D-xylulose 5-phosphate + CO2. It functions in the pathway metabolic intermediate biosynthesis; 1-deoxy-D-xylulose 5-phosphate biosynthesis; 1-deoxy-D-xylulose 5-phosphate from D-glyceraldehyde 3-phosphate and pyruvate: step 1/1. Its function is as follows. Catalyzes the acyloin condensation reaction between C atoms 2 and 3 of pyruvate and glyceraldehyde 3-phosphate to yield 1-deoxy-D-xylulose-5-phosphate (DXP). This Campylobacter hominis (strain ATCC BAA-381 / DSM 21671 / CCUG 45161 / LMG 19568 / NCTC 13146 / CH001A) protein is 1-deoxy-D-xylulose-5-phosphate synthase.